A 780-amino-acid polypeptide reads, in one-letter code: Vezatin (780 aa).

2 helical membrane-spanning segments follow: residues 140–160 and 162–182; these read ATPN…LIMF and TCWI…YLII. A coiled-coil region spans residues 430 to 467; the sequence is VRSLQLHLKALLNEVIILEDELEKLVCTKETQELLSEA. 2 disordered regions span residues 620–718 and 757–780; these read DPVE…PRDT and QEQT…VEEK. Over residues 624–643 the composition is skewed to polar residues; sequence SVSNSEPPMNSDTEKVNSNA. Composition is skewed to basic and acidic residues over residues 647-663 and 690-699; these read ETSK…RTEY and TMCHQHESEA. Positions 702–711 are enriched in low complexity; it reads PQAAAAGATA. A compositionally biased stretch (acidic residues) spans 761 to 780; sequence FGDEEEEQLVEGGENEVEEK.

The protein belongs to the vezatin family. As to quaternary structure, interacts with USH2A (via the cytoplasmic region); the interaction associates VEZT with the USH2 complex at the stereocilia base. Interacts with myosin MYO7A and the cadherin-catenins complex. As to expression, expressed in developing cochlear hair cells. Isoform 1, isoform 2 and isoform 3 are expressed in testis. In the seminiferous epithelium, present exclusively in the acrosome of spermatids (at protein level).

Its subcellular location is the cell membrane. It is found in the cell projection. The protein resides in the stereocilium membrane. The protein localises to the cell junction. It localises to the adherens junction. Its subcellular location is the nucleus. It is found in the cytoplasmic vesicle. The protein resides in the secretory vesicle. The protein localises to the acrosome. Its function is as follows. Plays a pivotal role in the establishment of adherens junctions and their maintenance in adult life. Required for morphogenesis of the preimplantation embryo, and for the implantation process. This Mus musculus (Mouse) protein is Vezatin.